A 93-amino-acid polypeptide reads, in one-letter code: Cell division protein FtsB (93 aa).

Residues Met-1–Val-3 are Cytoplasmic-facing. The helical transmembrane segment at Thr-4 to Phe-21 threads the bilayer. Residues Gly-22 to Pro-93 lie on the Periplasmic side of the membrane. Residues Asp-28 to Leu-75 adopt a coiled-coil conformation.

This sequence belongs to the FtsB family. In terms of assembly, part of a complex composed of FtsB, FtsL and FtsQ.

Its subcellular location is the cell inner membrane. Functionally, essential cell division protein. May link together the upstream cell division proteins, which are predominantly cytoplasmic, with the downstream cell division proteins, which are predominantly periplasmic. This Idiomarina loihiensis (strain ATCC BAA-735 / DSM 15497 / L2-TR) protein is Cell division protein FtsB.